The primary structure comprises 2531 residues: Serine/threonine-protein kinase ATR (2531 aa).

An FAT domain is found at 1490–2067; the sequence is LIVKVAETFG…MWQSAYLLRQ (578 aa). A PI3K/PI4K catalytic domain is found at 2192-2512; sequence FSDKVKVLHS…VSQLASSLIE (321 aa). A G-loop region spans residues 2198-2204; sequence VLHSNTK. Residues 2368–2376 are catalytic loop; it reads GLGDRHTKN. Residues 2387-2411 form an activation loop region; sequence HVDFDMIFNKGETLGTPELVPFRLT. An FATC domain is found at 2499 to 2531; sequence HPMQVSQLASSLIELATSEEKLSEMYLGWMATL.

Belongs to the PI3/PI4-kinase family. ATM subfamily. Mn(2+) is required as a cofactor.

It is found in the nucleus. The catalysed reaction is L-seryl-[protein] + ATP = O-phospho-L-seryl-[protein] + ADP + H(+). The enzyme catalyses L-threonyl-[protein] + ATP = O-phospho-L-threonyl-[protein] + ADP + H(+). Functionally, serine/threonine protein kinase which activates checkpoint signaling upon genotoxic stresses such as ionizing radiation (IR), ultraviolet light (UV), or DNA replication stalling, thereby acting as a DNA damage sensor. Recognizes the substrate consensus sequence [ST]-Q. Phosphorylates various proteins, which collectively inhibits DNA replication and mitosis and promotes DNA repair and recombination. Prevents mitotic catastrophe by functioning in the S-phase checkpoint and cooperating with atm-1 in the checkpoint response to double-strand breaks (DSBs) after ionizing radiation (IR) to induce cell cycle arrest or apoptosis via the cep-1/p53 pathway. In response to ionizing radiation, probably required for the association between the brc-1-brd-1 heterodimer and rad-51 and let-70 in order to activate E3-ubiquitin ligase activity of the heterodimer and induce ubiquitination at DNA damage sites. The chain is Serine/threonine-protein kinase ATR from Caenorhabditis elegans.